The primary structure comprises 364 residues: MEPSASCLPGFFMVCILLKITVLTQVMSLDIQINTQIPDTEEGVLVECTAESLFPPAEMTWRDSKGNIIPPSSTFDSQDRAGLLCLKSTILLKNRTEGPITCSIYNKTTNQEKRRSIILSDVLFRPQYMSLMSNNLLYLGIYLIFILFLNFLKGILFCLTKRLVHFRKRMIKIKKVWSNKTRACCPLIWEFLEIVLFIAFLPLYLMFRIRVFTLDEAHILYNNWLWKVCKTLIAMMILFTVLILFLLWTLNRYGKMPCLSSMNIDVSTHDAEQNSSKSAKFQENYDVAGQMILETYEETIFCQHQESCEEYNYDPLLLSSLDALGTCEDEKFSQHQESFEEDEDLQSFSDFKIELYSKLGNLTH.

The signal sequence occupies residues 1 to 28 (MEPSASCLPGFFMVCILLKITVLTQVMS). The 90-residue stretch at 29–118 (LDIQINTQIP…TNQEKRRSII (90 aa)) folds into the Ig-like V-type domain. Residues 29–138 (LDIQINTQIP…MSLMSNNLLY (110 aa)) lie on the Extracellular side of the membrane. Cys48 and Cys102 are joined by a disulfide. Residues 139–159 (LGIYLIFILFLNFLKGILFCL) form a helical membrane-spanning segment. Residues 160 to 186 (TKRLVHFRKRMIKIKKVWSNKTRACCP) are Cytoplasmic-facing. A helical transmembrane segment spans residues 187-207 (LIWEFLEIVLFIAFLPLYLMF). Residues 208 to 230 (RIRVFTLDEAHILYNNWLWKVCK) lie on the Extracellular side of the membrane. Residues 231-251 (TLIAMMILFTVLILFLLWTLN) traverse the membrane as a helical segment. At 252–364 (RYGKMPCLSS…LYSKLGNLTH (113 aa)) the chain is on the cytoplasmic side.

It belongs to the SKINT family. As to expression, expressed in skin and thymus.

Its subcellular location is the membrane. Functionally, may act by engaging a cell surface molecule on immature T-cells in the embryonic thymus. The chain is Selection and upkeep of intraepithelial T-cells protein 11 (Skint11) from Mus musculus (Mouse).